The following is a 2178-amino-acid chain: MFFKRQKGQYHEVERVTRFKLIKSGKHWLRAATSQFGLLRLMKGADISSVEVKVAEEQSVEKGGLNYLKGIIATGAVLGGAVVTSSSVYAEEEQALEKVIDTRDVLATRGEAVLSEEAATTLSSEGANPVESLSDTLSASESASANSVSTSISISESFSVSASASLSSSSSLSQSSSESASASESLSVSASTSQSFSSTTSSTQSSNNESLISSDSSNSLNTNQSVSARNQNARVRTRRAVAANDTEAPQVKSGDYVVYRGESFEYYAEITDNSGQVNRVVIRNVEGGANSTYLSPNWVKYSTENLGRPGNATVQNPLRTRIFGEVPLNEIVNEKSYYTRYIVAWDPSGNATQMVDNANRNGLERFVLTVKSQNEKYDPADPSVTYVNNLSNLSTSEREAVAAAVRAANPNIPPTAKITVSQNGTVTITYPDKSTDTIPANRVVKDLQISKSNSASQSSSVSASQSASTSVSASISASMSASVSVSTSASTSASVSASESASTSASVSASESASTSASVSASKSSSTSASVSASESASTSASVSASESASTSASVSASESASTSASVSASTSASTSASVSASESASTSASVSASESASTSASVSASESASTSASVSASESASTSASVSASESSSTSASVSASESASTSASVSASESASTSASVSASTSASTSASVSASTSASTSASVSASTSASTSASVSASESASTSASVSASESASTSASVSASTSASTSASVSASTSASTSASVSASESASTSASVSASTSASTSASVSASESASTSASVSASTSASTSASVSASESASTSASVSASESASTSASVSASTSASTSASVSASESASTSASVSASESASTSASVSASESASTSASVSASTSASTSASVSASESASTSASVSASESASTSASVSASESASTSASVSASESASTSASVSASTSASTSASVSASESASTSASVSASESASTSASVSASESASTSASVSASESASTSASISASESASTSASVSASESASTSASVSASTSASTSASVSASESASTSASVSASESASTSASVSASESASTSASVSASESASTSASVSASESASTSASVSASTSASTSASVSASESSSTSASVSASESASTSSSVSASESASTSASVSASESASTSASVSASESASTSASVSASESASTSASVSASESASTSASVSASESASTSASVSASESASTSASVSASTSASTSASVSASESASTSASVSASESASTSASVSASTSASTSASVSASESASTSASVSASESASTSASVSASESASTSASVSASTSASTSASVSASESASTSASVSASESASMSASVSASESASTSASVSASESASTSASVSASESASTSASVSASESASTSASVSASESASTSASVSASESASTSASVSASESAYTSASASASESASTSASISASESASTSASVSASESAYTSASVSASESGSTSASVSASESASTSASVSASESASTSASVSASTSASTSASVSASESSSTSASVSASESASTSASVSASESASTSASVSASTSASTSASVSASESASTSASVSASESASTSASVSASESASTSASVSTSESASTSASVSASESASTSASVSASESASTSASVSASESSSTSASVSASESASTSASVSASESASTSASVSASESASTSASVSASESASTSVSVSASESASTSASVSASESASSSASVSASKSASMSASVLASESASTSASVSASESASTSASVSASESASTSASVSASESASTSASVSASESASTSASVSASESASTSASVSASESASTSASVSASTSASTSASVSASESASTSASVSASESASTSASVSASESASTSASVSASESVSANESASTSASVSASTSASTSASVSSSESASTSASVSASESASTSASVSASESASTSASVSASESASISASISASESSSTSASVSASESASTSASVSASTSTSTSASVSASESASTSASVFASESASTSASVSASESASTSASVSASTSASTSASVSASESASTSASISASESASTSASISASESSSTSASVSASTSASTSASVSASESTSTSVSISASESVSISTSVSQSMSVSESLSLSVSTSTLHSQLNGIYESELNSLSLSESLSMSQSLSQSLSDSQSTSATQSMHDRISKGQLPRTGESESKASILALGIGALGLAFKKRKKNESED.

A signal peptide spans 1 to 90 (MFFKRQKGQY…AVVTSSSVYA (90 aa)). The segment at 91-137 (EEEQALEKVIDTRDVLATRGEAVLSEEAATTLSSEGANPVESLSDTL) is non-repeat region 1 (NR1). Residues 138–219 (SASESASANS…SLISSDSSNS (82 aa)) form a ser-rich region 1 (SR1) region. Residues 192 to 244 (TSQSFSSTTSSTQSSNNESLISSDSSNSLNTNQSVSARNQNARVRTRRAVAAN) show a composition bias toward low complexity. 11 disordered regions span residues 192–246 (TSQS…ANDT), 495–557 (VSAS…SVSA), 584–653 (SAST…SVSA), 836–857 (SASTSASVSASESASTSASVSA), 884–917 (SASTSASVSASESASTSASVSASESASTSASVSA), 944–993 (SAST…SESA), 1020–1289 (SASV…SVSA), 1341–1390 (ASTS…ESAS), 1488–1685 (SASV…SVSA), 1725–1901 (ASTS…SAST), and 2119–2151 (LSQSLSDSQSTSATQSMHDRISKGQLPRTGESE). Positions 220 to 449 (LNTNQSVSAR…ANRVVKDLQI (230 aa)) are non-repeat region 2 (NR2). The segment at 450–2143 (SKSNSASQSS…SMHDRISKGQ (1694 aa)) is ser-rich region 2 (SR2). The segment covering 2119–2130 (LSQSLSDSQSTS) has biased composition (low complexity). Positions 2144–2148 (LPRTG) match the LPXTG sorting signal motif. At Thr2147 the chain carries Pentaglycyl murein peptidoglycan amidated threonine. Residues 2148-2178 (GESESKASILALGIGALGLAFKKRKKNESED) constitute a propeptide, removed by sortase.

The protein belongs to the serine-rich repeat protein (SRRP) family. The protein is glycosylated in vivo; constructs without SR1 and SR2 are not glycosylated.

The protein localises to the secreted. The protein resides in the cell wall. In terms of biological role, a cell wall protein involved with PadA in host cell interactions required for colonization and pathogensis. Mediates hemagglutination and adherence to ghst glycoproteins. Recognizes fetuin-A (AHSG), a highly glycosylated human plasma protein, also involved in recognition of human platelets, probably via platelet glycoprotein Ib alpha (GP1BA). Acts in concert with PadA to promote binding to glycosylated human fibronectin (FN1) and vitronectin (VTN), and biofilm formation. Plays a major role in fibronectin and vitronectin binding; binding is mediated by glycosylated regions. Probably mediates interaction of PadA with resting platelets. This chain is Streptococcal hemagglutinin, found in Streptococcus gordonii (strain Challis / ATCC 35105 / BCRC 15272 / CH1 / DL1 / V288).